The chain runs to 197 residues: uncharacterized protein (197 aa).

Positions 168–185 are enriched in basic and acidic residues; sequence QRDDFSEDSHANDPKLVG. A disordered region spans residues 168–197; sequence QRDDFSEDSHANDPKLVGDDYVPQAPEQIN.

This is an uncharacterized protein from Escherichia coli (strain K12).